The primary structure comprises 558 residues: DALR anticodon-binding domain-containing protein 3 (558 aa).

The segment at 213 to 240 (KALENSAYRDRETEKGKRRSRGEEIEGE) is disordered.

The polypeptide is DALR anticodon-binding domain-containing protein 3 (dalrd3) (Danio rerio (Zebrafish)).